The sequence spans 354 residues: Methionine import ATP-binding protein MetN (354 aa).

The ABC transporter domain occupies 8–250 (LDHIDITFRQ…PKEALTQEFI (243 aa)). 42–49 (GYSGAGKS) serves as a coordination point for ATP.

It belongs to the ABC transporter superfamily. Methionine importer (TC 3.A.1.24) family. The complex is composed of two ATP-binding proteins (MetN), two transmembrane proteins (MetI) and a solute-binding protein (MetQ).

The protein localises to the cell membrane. It carries out the reaction L-methionine(out) + ATP + H2O = L-methionine(in) + ADP + phosphate + H(+). It catalyses the reaction D-methionine(out) + ATP + H2O = D-methionine(in) + ADP + phosphate + H(+). Part of the ABC transporter complex MetNIQ involved in methionine import. Responsible for energy coupling to the transport system. This is Methionine import ATP-binding protein MetN from Streptococcus pyogenes serotype M2 (strain MGAS10270).